The following is a 399-amino-acid chain: P2X purinoceptor 1 (399 aa).

The Cytoplasmic segment spans residues Met-1–Lys-28. A helical transmembrane segment spans residues Val-29–Val-50. Over Tyr-51 to Gly-338 the chain is Extracellular. Residues Lys-68, Lys-70, and Lys-140 each contribute to the CTP site. Lys-70 lines the ATP pocket. Cystine bridges form between Cys-117–Cys-165, Cys-126–Cys-149, and Cys-132–Cys-159. Residues Asn-153 and Asn-184 are each glycosylated (N-linked (GlcNAc...) asparagine). CTP is bound at residue Thr-186. Thr-186 serves as a coordination point for ATP. Residue Asn-210 is glycosylated (N-linked (GlcNAc...) asparagine). Cystine bridges form between Cys-217–Cys-227 and Cys-261–Cys-270. Residues Ser-286, Asn-290, and Arg-292 each coordinate ATP. CTP-binding residues include Asn-290 and Arg-292. Asn-300 carries an N-linked (GlcNAc...) asparagine glycan. Residue Lys-309 participates in CTP binding. Residue Lys-309 coordinates ATP. Residues Thr-331–Gly-338 are pore-forming motif. A helical transmembrane segment spans residues Ile-339 to Pro-358. Topologically, residues Lys-359 to Ser-399 are cytoplasmic. The disordered stretch occupies residues Met-374–Ser-399. Positions Ala-385 to Ser-399 are enriched in polar residues. A phosphoserine mark is found at Ser-387 and Ser-388. The residue at position 389 (Thr-389) is a Phosphothreonine.

Belongs to the P2X receptor family. As to quaternary structure, functional P2XRs are organized as homomeric and heteromeric trimers. Homotrimer. Forms heterodimer with P2RX2. Forms heterodimer with P2RX4. Forms heterodimer with P2RX5. High levels in vas deferens and urinary bladder. Lower extent in spinal cord, coeliac ganglion, lung and spleen (probably in the smooth muscle part of both organs).

It localises to the cell membrane. The enzyme catalyses Ca(2+)(in) = Ca(2+)(out). The catalysed reaction is K(+)(in) = K(+)(out). It catalyses the reaction Na(+)(in) = Na(+)(out). Activated by low concentrations of ATP (&lt;1 uM). Undergoes rapid desensitisation. Sensitives to the ATP agonist:alpha/beta-methylene-ATP. Modulated by cholesterol. Functionally, ATP-gated nonselective transmembrane cation channel permeable to potassium, sodium and with relatively high calcium permeability. Furthermore, CTP functions as a weak affinity agonist for P2RX1. Plays a role a role in urogenital, immune and cardiovascular function. Specifically, plays an important role in neurogenic contraction of smooth muscle of the vas deferens, and therefore is essential for normal male reproductive function. In addition, contributes to smooth muscle contractions of the urinary bladder. On platelets, contributes to platelet activation and aggregation and thereby, also to thrombosis. On neutrophils, it is involved in chemotaxis and in mitigating the activation of circulating cells. The protein is P2X purinoceptor 1 (P2rx1) of Rattus norvegicus (Rat).